The primary structure comprises 130 residues: Holo-[acyl-carrier-protein] synthase (130 aa).

Positions 8 and 62 each coordinate Mg(2+).

The protein belongs to the P-Pant transferase superfamily. AcpS family. The cofactor is Mg(2+).

The protein resides in the cytoplasm. It catalyses the reaction apo-[ACP] + CoA = holo-[ACP] + adenosine 3',5'-bisphosphate + H(+). In terms of biological role, transfers the 4'-phosphopantetheine moiety from coenzyme A to a Ser of acyl-carrier-protein. The protein is Holo-[acyl-carrier-protein] synthase of Polynucleobacter asymbioticus (strain DSM 18221 / CIP 109841 / QLW-P1DMWA-1) (Polynucleobacter necessarius subsp. asymbioticus).